A 570-amino-acid chain; its full sequence is Nucleoprotein (570 aa).

The tract at residues 54 to 241 is binding site for the cap structure m7GTP; the sequence is MRKDKRNDSD…IDVSKSSINV (188 aa). Residues 342–361 are disordered; the sequence is IDLSQNKQMSPAKPKGAGHG. Aspartate 390 and glutamate 392 together coordinate Mn(2+). Positions 400, 507, 510, and 530 each coordinate Zn(2+). Position 534 (aspartate 534) interacts with Mn(2+).

This sequence belongs to the arenaviridae nucleocapsid protein family. In terms of assembly, homomultimerizes to form the nucleocapsid. Binds to viral genomic RNA. Interacts with glycoprotein G2. Interacts with protein Z; this interaction probably directs the encapsidated genome to budding sites. Interacts with protein L; this interaction does not interfere with Z-L interaction. Interacts with host IKBKE (via Protein kinase domain); the interaction inhibits IKBKE kinase activity.

It is found in the virion. The protein resides in the host cytoplasm. Functionally, encapsidates the genome, protecting it from nucleases. The encapsidated genomic RNA is termed the nucleocapsid (NC). Serves as template for viral transcription and replication. The increased presence of protein N in host cell does not seem to trigger the switch from transcription to replication as observed in other negative strain RNA viruses. Through the interaction with host IKBKE, strongly inhibits the phosphorylation and nuclear translocation of host IRF3, a protein involved in interferon activation pathway, leading to the inhibition of interferon-beta and IRF3-dependent promoters activation. Also encodes a functional 3'-5' exoribonuclease that degrades preferentially dsRNA substrates and thereby participates in the suppression of interferon induction. The chain is Nucleoprotein from Praomys (African soft-furred rats).